The sequence spans 89 residues: MSITAEKKQEVIQSNARAEGDTGSPEVQVAILTSRIQTLTEHFKSHHKDNHSRRGLLMMVNKRRSLLDYLKKKDVERYNALIQKLGLRK.

The segment covering 1 to 10 (MSITAEKKQE) has biased composition (basic and acidic residues). Residues 1 to 24 (MSITAEKKQEVIQSNARAEGDTGS) form a disordered region.

The protein belongs to the universal ribosomal protein uS15 family. In terms of assembly, part of the 30S ribosomal subunit. Forms a bridge to the 50S subunit in the 70S ribosome, contacting the 23S rRNA.

Its function is as follows. One of the primary rRNA binding proteins, it binds directly to 16S rRNA where it helps nucleate assembly of the platform of the 30S subunit by binding and bridging several RNA helices of the 16S rRNA. Forms an intersubunit bridge (bridge B4) with the 23S rRNA of the 50S subunit in the ribosome. This Novosphingobium aromaticivorans (strain ATCC 700278 / DSM 12444 / CCUG 56034 / CIP 105152 / NBRC 16084 / F199) protein is Small ribosomal subunit protein uS15.